A 143-amino-acid chain; its full sequence is Peptide methionine sulfoxide reductase MsrB (143 aa).

The MsrB domain maps to 16 to 139 (DAELRRRLTP…NSAALNFESR (124 aa)). Positions 55, 58, 104, and 107 each coordinate Zn(2+). The active-site Nucleophile is the C128.

It belongs to the MsrB Met sulfoxide reductase family. It depends on Zn(2+) as a cofactor.

It carries out the reaction L-methionyl-[protein] + [thioredoxin]-disulfide + H2O = L-methionyl-(R)-S-oxide-[protein] + [thioredoxin]-dithiol. The chain is Peptide methionine sulfoxide reductase MsrB from Burkholderia ambifaria (strain MC40-6).